An 896-amino-acid polypeptide reads, in one-letter code: Glutamate receptor 2.4 (896 aa).

The first 24 residues, 1–24 (MKRHLNDVVLVFLVFIFGVKLGKG), serve as a signal peptide directing secretion. Residues 25–565 (QNTTIQVINV…SSLIFFKPLT (541 aa)) are Extracellular-facing. N-linked (GlcNAc...) asparagine glycans are attached at residues asparagine 26, asparagine 46, asparagine 53, asparagine 204, asparagine 267, asparagine 331, asparagine 341, and asparagine 527. The chain crosses the membrane as a helical span at residues 566 to 586 (PGLWGMTLGSFFVVGFVVWIL). Topologically, residues 587–595 (EHRVNSEFT) are cytoplasmic. The helical transmembrane segment at 596–616 (GPPQYQISTMFWFAFSIMVFA) threads the bilayer. Over 617-620 (PRER) the chain is Cytoplasmic. A helical transmembrane segment spans residues 621-641 (VMSFTARVVVITWYFIVLVLT). Topologically, residues 642–815 (QSYTASLSSL…VSFRKLSLDS (174 aa)) are extracellular. The helical transmembrane segment at 816 to 836 (FLLLFVAAATVCTLALLKFVI) threads the bilayer. Topologically, residues 837-896 (CFLIQNRIILNDEFYRGKRMKEMWLKFMESDGESYISRVRSTCPQVLIQPREEDIDPING) are cytoplasmic.

It belongs to the glutamate-gated ion channel (TC 1.A.10.1) family. In terms of assembly, may form heteromers. Expressed predominantly in roots.

The protein localises to the membrane. Its function is as follows. Glutamate-gated receptor that probably acts as a non-selective cation channel. May be involved in light-signal transduction and calcium homeostasis via the regulation of calcium influx into cells. In Arabidopsis thaliana (Mouse-ear cress), this protein is Glutamate receptor 2.4 (GLR2.4).